The primary structure comprises 620 residues: Methionine--tRNA ligase (620 aa).

A 'HIGH' region motif is present at residues 11 to 21 (PYANGPRHIGH). 4 residues coordinate Zn(2+): C143, C146, C156, and C159. The 'KMSKS' region signature appears at 347–351 (KFSSS). ATP is bound at residue S350.

This sequence belongs to the class-I aminoacyl-tRNA synthetase family. MetG type 1 subfamily. As to quaternary structure, monomer. Requires Zn(2+) as cofactor.

The protein resides in the cytoplasm. The enzyme catalyses tRNA(Met) + L-methionine + ATP = L-methionyl-tRNA(Met) + AMP + diphosphate. Its function is as follows. Is required not only for elongation of protein synthesis but also for the initiation of all mRNA translation through initiator tRNA(fMet) aminoacylation. In Bifidobacterium adolescentis (strain ATCC 15703 / DSM 20083 / NCTC 11814 / E194a), this protein is Methionine--tRNA ligase.